The sequence spans 394 residues: MMNDSQVQLFQLYNYSVYSNGTISNFTNCYLINDEHTPIIESDGMIYNGQSCDSPVKSLASHGAVGIVTACFCFFLIPLLLVNIAKYWKGKPPLLKRRMEFIWITLLILALAVGGFAYIDVDRNLVQGAAMKIFSFTFQTALPISIAIIWHVISTYGFALYRQRIVVGKHAAHFSLDHWIFVVEYYAPIVFYVFNLMGFFLAALHPWTKVVRGDGNAATDGRFKASSVLLAIAWVFACAMFIVYSFVYKLDRRGRWVGMVIMMISILPRIVYQFLETWSFTLNASNVSVNAGLVFGLGFCPPLILAYTVCIYGWAVPSIAELEKEAIHEECRQRKRRTTISRDNSTRSTWGIGSEHDMQCLPPSYETMGPCEKEMKEETNEVEIASIESGEVRE.

N-linked (GlcNAc...) asparagine glycosylation is found at asparagine 3, asparagine 14, asparagine 20, and asparagine 25. 6 helical membrane-spanning segments follow: residues alanine 64 to isoleucine 84, phenylalanine 101 to valine 121, isoleucine 133 to isoleucine 153, isoleucine 180 to phenylalanine 200, valine 228 to tyrosine 248, and tryptophan 256 to glutamate 276. N-linked (GlcNAc...) asparagine glycans are attached at residues asparagine 283 and asparagine 286. A helical membrane pass occupies residues alanine 291–isoleucine 311. A glycan (N-linked (GlcNAc...) asparagine) is linked at asparagine 344.

It localises to the membrane. This is an uncharacterized protein from Schizosaccharomyces pombe (strain 972 / ATCC 24843) (Fission yeast).